A 704-amino-acid polypeptide reads, in one-letter code: Elongation factor G (704 aa).

Residues 8-290 (ARYRNIGISA…AVIDYLPSPV (283 aa)) form the tr-type G domain. GTP-binding positions include 17–24 (AHIDAGKT), 88–92 (DTPGH), and 142–145 (NKMD). N6-acetyllysine is present on residues Lys-504 and Lys-643.

The protein belongs to the TRAFAC class translation factor GTPase superfamily. Classic translation factor GTPase family. EF-G/EF-2 subfamily.

Its subcellular location is the cytoplasm. In terms of biological role, catalyzes the GTP-dependent ribosomal translocation step during translation elongation. During this step, the ribosome changes from the pre-translocational (PRE) to the post-translocational (POST) state as the newly formed A-site-bound peptidyl-tRNA and P-site-bound deacylated tRNA move to the P and E sites, respectively. Catalyzes the coordinated movement of the two tRNA molecules, the mRNA and conformational changes in the ribosome. This is Elongation factor G from Escherichia coli O17:K52:H18 (strain UMN026 / ExPEC).